The sequence spans 321 residues: Olfactory receptor 56B34 (321 aa).

Over M1–P36 the chain is Extracellular. Residues M37–L57 form a helical membrane-spanning segment. At E58–G70 the chain is on the cytoplasmic side. Residues I71–L91 form a helical membrane-spanning segment. Residues W92–A105 are Extracellular-facing. Cysteines 103 and 185 form a disulfide. A helical transmembrane segment spans residues Q106–I126. Over D127 to R128 the chain is Cytoplasmic. Residues Y129–K149 form a helical membrane-spanning segment. Residues A150–A207 are Extracellular-facing. The helical transmembrane segment at L208 to I228 threads the bilayer. Topologically, residues R229–H250 are cytoplasmic. The chain crosses the membrane as a helical span at residues L251–G271. Residues R272 to P275 lie on the Extracellular side of the membrane. Residues L276–V296 traverse the membrane as a helical segment. Topologically, residues Y297 to K321 are cytoplasmic.

This sequence belongs to the G-protein coupled receptor 1 family.

Its subcellular location is the cell membrane. Functionally, odorant receptor. The protein is Olfactory receptor 56B34 of Mus musculus (Mouse).